We begin with the raw amino-acid sequence, 566 residues long: Arginine--tRNA ligase (566 aa).

Residues 124 to 134 (ANPNGPLHIGH) carry the 'HIGH' region motif.

It belongs to the class-I aminoacyl-tRNA synthetase family.

It is found in the cytoplasm. The enzyme catalyses tRNA(Arg) + L-arginine + ATP = L-arginyl-tRNA(Arg) + AMP + diphosphate. This Methanocaldococcus jannaschii (strain ATCC 43067 / DSM 2661 / JAL-1 / JCM 10045 / NBRC 100440) (Methanococcus jannaschii) protein is Arginine--tRNA ligase (argS).